The following is a 310-amino-acid chain: Coproporphyrin III ferrochelatase (310 aa).

Residues Tyr13, Arg30, 46–47 (RY), Ser54, and Tyr125 each bind Fe-coproporphyrin III. Fe(2+) contacts are provided by His183 and Glu264.

Belongs to the ferrochelatase family.

It localises to the cytoplasm. It catalyses the reaction Fe-coproporphyrin III + 2 H(+) = coproporphyrin III + Fe(2+). It functions in the pathway porphyrin-containing compound metabolism; protoheme biosynthesis. Functionally, involved in coproporphyrin-dependent heme b biosynthesis. Catalyzes the insertion of ferrous iron into coproporphyrin III to form Fe-coproporphyrin III. This is Coproporphyrin III ferrochelatase from Geobacillus sp. (strain WCH70).